Consider the following 465-residue polypeptide: Ribulose bisphosphate carboxylase large chain (465 aa).

At K4 the chain carries N6,N6,N6-trimethyllysine. Substrate contacts are provided by X113 and T163. Residue K165 is the Proton acceptor of the active site. K167 provides a ligand contact to substrate. Mg(2+) is bound by residues K191, D193, and E194. K191 carries the N6-carboxylysine modification. The Proton acceptor role is filled by H284. 3 residues coordinate substrate: R285, H317, and S369.

Belongs to the RuBisCO large chain family. Type I subfamily. Heterohexadecamer of 8 large chains and 8 small chains; disulfide-linked. The disulfide link is formed within the large subunit homodimers. Mg(2+) serves as cofactor. The disulfide bond which can form in the large chain dimeric partners within the hexadecamer appears to be associated with oxidative stress and protein turnover.

The protein localises to the plastid. It is found in the chloroplast. The enzyme catalyses 2 (2R)-3-phosphoglycerate + 2 H(+) = D-ribulose 1,5-bisphosphate + CO2 + H2O. It carries out the reaction D-ribulose 1,5-bisphosphate + O2 = 2-phosphoglycolate + (2R)-3-phosphoglycerate + 2 H(+). Its function is as follows. RuBisCO catalyzes two reactions: the carboxylation of D-ribulose 1,5-bisphosphate, the primary event in carbon dioxide fixation, as well as the oxidative fragmentation of the pentose substrate in the photorespiration process. Both reactions occur simultaneously and in competition at the same active site. In Cornus obliqua (Silky dogwood), this protein is Ribulose bisphosphate carboxylase large chain.